The primary structure comprises 104 residues: MIRKAFVMAVNPDAHAEYQRRHTPIWPELESVLKAHGAHHYSIFLDETRNLLFGVVEIESEERWNAVAQTAECQRWWQHMADVMPSHPDNSPVSQALREVFYLE.

Residue Y18 participates in substrate binding. H22 functions as the Proton donor in the catalytic mechanism. Substrate-binding positions include Y41 and 76 to 77 (WW).

The protein belongs to the rhamnose mutarotase family. In terms of assembly, homodimer.

The protein localises to the cytoplasm. It catalyses the reaction alpha-L-rhamnose = beta-L-rhamnose. It functions in the pathway carbohydrate metabolism; L-rhamnose metabolism. Involved in the anomeric conversion of L-rhamnose. The sequence is that of L-rhamnose mutarotase from Yersinia pseudotuberculosis serotype O:1b (strain IP 31758).